The sequence spans 359 residues: Fructose-bisphosphate aldolase (359 aa).

Position 50 (Ser-50) interacts with D-glyceraldehyde 3-phosphate. Catalysis depends on Asp-83, which acts as the Proton donor. Zn(2+) contacts are provided by His-84, Asp-105, Glu-142, and His-198. Position 199 (Gly-199) interacts with dihydroxyacetone phosphate. Zn(2+) is bound at residue His-232. Dihydroxyacetone phosphate is bound by residues 233–235 (GSS) and 275–278 (NIDT).

The protein belongs to the class II fructose-bisphosphate aldolase family. Homodimer. Zn(2+) serves as cofactor.

It catalyses the reaction beta-D-fructose 1,6-bisphosphate = D-glyceraldehyde 3-phosphate + dihydroxyacetone phosphate. It participates in carbohydrate biosynthesis; Calvin cycle. Its pathway is carbohydrate degradation; glycolysis; D-glyceraldehyde 3-phosphate and glycerone phosphate from D-glucose: step 4/4. Functionally, catalyzes the aldol condensation of dihydroxyacetone phosphate (DHAP or glycerone-phosphate) with glyceraldehyde 3-phosphate (G3P) to form fructose 1,6-bisphosphate (FBP) in gluconeogenesis and the reverse reaction in glycolysis. This is Fructose-bisphosphate aldolase (cbbA) from Sinorhizobium medicae (strain WSM419) (Ensifer medicae).